The following is a 327-amino-acid chain: Malate dehydrogenase (327 aa).

NAD(+) is bound at residue glycine 12–cysteine 18. Positions 92 and 98 each coordinate substrate. NAD(+)-binding positions include asparagine 105, glutamine 112, and threonine 129–asparagine 131. Residues asparagine 131 and arginine 162 each coordinate substrate. Histidine 187 functions as the Proton acceptor in the catalytic mechanism.

It belongs to the LDH/MDH superfamily. MDH type 2 family.

The enzyme catalyses (S)-malate + NAD(+) = oxaloacetate + NADH + H(+). Catalyzes the reversible oxidation of malate to oxaloacetate. This Cutibacterium acnes (strain DSM 16379 / KPA171202) (Propionibacterium acnes) protein is Malate dehydrogenase.